A 215-amino-acid polypeptide reads, in one-letter code: Nuclear autoantigen Sp-100 (215 aa).

Positions 1–31 (EGDRGASKNWKLSIRCGGYTLKVLTENKFLP) constitute an SAND domain. DNA-binding regions (HMG box) lie at residues 32–108 (EPPS…KTYI) and 124–192 (PKRP…AACR). Positions 72-89 (KKRSEMWKTIFAKEKGKF) match the Nuclear localization signal motif. Disordered stretches follow at residues 104–124 (MKTY…PNAP) and 193–215 (AKGK…KKKE).

As to quaternary structure, homodimer. Interacts with members of the HP1 family of nonhistone chromosomal protein, such as CBX5 and CBX3 via the PxVxL motif. Interacts with ETS1; the interaction is direct and modulates ETS1 transcriptional activity. Interacts with the MRN complex which is composed of two heterodimers RAD50/MRE11 associated with a single NBN; recruits the complex to PML-related bodies. Interacts with HIPK2; positively regulates TP53-dependent transcription. Interacts with CASP8AP2; may negatively regulate CASP8AP2 export from the nucleus to the cytoplasm. Post-translationally, phosphorylated. In terms of processing, sumoylated. Sumoylated with SUMO1. Sumoylation depends on a functional nuclear localization signal but is not necessary for nuclear import or nuclear body targeting. Sumoylation may stabilize the interaction with CBX5.

The protein localises to the nucleus. Its subcellular location is the PML body. It is found in the nuclear body. It localises to the cytoplasm. Together with PML, this tumor suppressor is a major constituent of the PML bodies, a subnuclear organelle involved in a large number of physiological processes including cell growth, differentiation and apoptosis. Functions as a transcriptional coactivator of ETS1 and ETS2. Under certain conditions, it may also act as a corepressor of ETS1 preventing its binding to DNA. Through the regulation of ETS1 it may play a role in angiogenesis, controlling endothelial cell motility and invasion. Through interaction with the MRN complex it may be involved in the regulation of telomeres lengthening. May also regulate TP53-mediated transcription and through CASP8AP2, regulate FAS-mediated apoptosis. May also play a role in infection by viruses through mechanisms that may involve chromatin and/or transcriptional regulation. This chain is Nuclear autoantigen Sp-100 (SP100), found in Pan troglodytes (Chimpanzee).